The following is a 278-amino-acid chain: NADPH-dependent 7-cyano-7-deazaguanine reductase (278 aa).

Substrate is bound at residue 87 to 89 (IES). Residue 89-90 (SK) coordinates NADPH. Cys185 serves as the catalytic Thioimide intermediate. Catalysis depends on Asp192, which acts as the Proton donor. Residue 224-225 (HE) participates in substrate binding. An NADPH-binding site is contributed by 253–254 (RG). Positions 255–278 (GLDINPYRSTNPTFSVQNHRSFRQ) are disordered. Positions 261–278 (YRSTNPTFSVQNHRSFRQ) are enriched in polar residues.

The protein belongs to the GTP cyclohydrolase I family. QueF type 2 subfamily. In terms of assembly, homodimer.

It localises to the cytoplasm. The enzyme catalyses 7-aminomethyl-7-carbaguanine + 2 NADP(+) = 7-cyano-7-deazaguanine + 2 NADPH + 3 H(+). Its pathway is tRNA modification; tRNA-queuosine biosynthesis. Its function is as follows. Catalyzes the NADPH-dependent reduction of 7-cyano-7-deazaguanine (preQ0) to 7-aminomethyl-7-deazaguanine (preQ1). This Coxiella burnetii (strain CbuK_Q154) (Coxiella burnetii (strain Q154)) protein is NADPH-dependent 7-cyano-7-deazaguanine reductase.